A 119-amino-acid chain; its full sequence is Holo-[acyl-carrier-protein] synthase (119 aa).

Asp-8 and Glu-50 together coordinate Mg(2+).

The protein belongs to the P-Pant transferase superfamily. AcpS family. Mg(2+) is required as a cofactor.

Its subcellular location is the cytoplasm. It carries out the reaction apo-[ACP] + CoA = holo-[ACP] + adenosine 3',5'-bisphosphate + H(+). In terms of biological role, transfers the 4'-phosphopantetheine moiety from coenzyme A to a Ser of acyl-carrier-protein. The protein is Holo-[acyl-carrier-protein] synthase of Clavibacter sepedonicus (Clavibacter michiganensis subsp. sepedonicus).